The sequence spans 932 residues: 2-oxoglutarate dehydrogenase E1 component (932 aa).

It belongs to the alpha-ketoglutarate dehydrogenase family. As to quaternary structure, homodimer. Part of the 2-oxoglutarate dehydrogenase (OGDH) complex composed of E1 (2-oxoglutarate dehydrogenase), E2 (dihydrolipoamide succinyltransferase) and E3 (dihydrolipoamide dehydrogenase); the complex contains multiple copies of the three enzymatic components (E1, E2 and E3). Thiamine diphosphate serves as cofactor.

It catalyses the reaction N(6)-[(R)-lipoyl]-L-lysyl-[protein] + 2-oxoglutarate + H(+) = N(6)-[(R)-S(8)-succinyldihydrolipoyl]-L-lysyl-[protein] + CO2. Functionally, E1 component of the 2-oxoglutarate dehydrogenase (OGDH) complex which catalyzes the decarboxylation of 2-oxoglutarate, the first step in the conversion of 2-oxoglutarate to succinyl-CoA and CO(2). This chain is 2-oxoglutarate dehydrogenase E1 component, found in Staphylococcus aureus (strain bovine RF122 / ET3-1).